A 678-amino-acid chain; its full sequence is uncharacterized protein (678 aa).

Transmembrane regions (helical) follow at residues 228 to 250 (FFVILILGAVITLLLSLAIFSFL), 263 to 285 (LAMWWLPAILGVLSVCSVFVATQ), 300 to 322 (STGALPLLALIVKHSIAIALSCV), 334 to 356 (MLHNGFIGGYLASTLCLLYAVLF), 361 to 380 (FSLSAVFALEYALSLVFFSA), 387 to 405 (RIMLAMMFLLFAPFLYAYL), 420 to 439 (NVFFALGCVPFMLFMLTLFF), and 455 to 477 (NLLLSGALLTVLVINGVLWSVSL). Residues 653–678 (PSSQGVHATPEKNACIRDETVPNLQE) are disordered.

It is found in the cell membrane. This is an uncharacterized protein from Treponema pallidum (strain Nichols).